The chain runs to 173 residues: Plasmolipin (173 aa).

Over 1 to 34 (MADFPGKVSTQTSSQEPQRSFAISSSVDMGFIKS) the chain is Cytoplasmic. Positions 31-160 (FIKSIPGILL…SSYFAYLGWR (130 aa)) constitute an MARVEL domain. A helical membrane pass occupies residues 35 to 55 (IPGILLIAEIVVGLLVWTLIA). The Extracellular segment spans residues 56-67 (STPHYLIPALGW). The chain crosses the membrane as a helical span at residues 68–88 (VLFVSITLWLLSIALLVILLL). Topologically, residues 89–98 (SLHQRLPSVP) are cytoplasmic. A helical transmembrane segment spans residues 99–119 (WPLVLLVFYSVAALLYLTAFL). Residues 120 to 138 (ANAATVPGGYYQGHLGASA) are Extracellular-facing. A helical membrane pass occupies residues 139–159 (FFGIVETLLYTASSYFAYLGW). Topologically, residues 160 to 173 (RGEGQNAAGSTVPV) are cytoplasmic.

This sequence belongs to the MAL family. As to quaternary structure, forms oligomers. Expressed in the posterior midgut.

Its subcellular location is the cell membrane. The protein resides in the myelin membrane. It is found in the apical cell membrane. It localises to the recycling endosome membrane. The protein localises to the vesicle. Main component of the myelin sheath that plays an important role in myelin membrane biogenesis and myelination. Plays an essential function in apical endocytosis. Plays an important role by activating the Notch signaling pathway, which is essential for cell differentiation and results in correct patterning of the intestinal epithelium, particularly of the posterior gut absorptive cells. The chain is Plasmolipin (pllp) from Danio rerio (Zebrafish).